Here is a 147-residue protein sequence, read N- to C-terminus: Orcokinin peptides (147 aa).

The signal sequence occupies residues 1 to 27 (MPRHSVFALSILALSITATVWIPTVQA). 2 propeptides span residues 28 to 89 (ETNL…ERFG) and 146 to 147 (FG).

The protein belongs to the orcokinin family.

The protein resides in the secreted. Its function is as follows. Myotropic peptides. In Apis mellifera (Honeybee), this protein is Orcokinin peptides.